Here is a 416-residue protein sequence, read N- to C-terminus: MAFVAPVSSVFSTSSKSAVCSGRSSFAQFSGLKKVNNTARLQTAEQGSAFGGVSDANDAFFNAVNTMGAPARTSNAPSMKVRVAINGFGRIGRNFIRCWAGRTDSNMDVVCINDTSGVKTASHLLKYDSILGTFDSDVVAGEDSITVDGKTIKVVSNRNPLELPWKEMEIDIVVEATGVFVDAVGAGKHIQAGAKKVLITAPGKGEGVGTFVVGVNDHLYSHDKFDIVSNASCTTNCMAPFMKVLDDEFGVVRGMMTTTHSYTGDQRLLDAGHRDLRRARSAALNIVPTTTGAAKAVALVVPTLAGKLNGIALRVPTPNVSVCDVVMQVSKKTFKEEVNGALLKAANGSMKGIIKYSDEPLVSCDYRGTDESTIIDSSLTMVMGDDMLKVVAWYDNEWGYSQRVVDLGEVMASQWK.

The transit peptide at 1–78 (MAFVAPVSSV…APARTSNAPS (78 aa)) directs the protein to the chloroplast. NADP(+) contacts are provided by residues 90-91 (RI), D114, and R158. D-glyceraldehyde 3-phosphate-binding positions include 232–234 (SCT), T263, R278, 291–292 (TG), and R314. The active-site Nucleophile is the C233. NADP(+) is bound at residue N396.

Belongs to the glyceraldehyde-3-phosphate dehydrogenase family. In terms of assembly, homotetramer.

Its subcellular location is the plastid. It is found in the chloroplast. The catalysed reaction is D-glyceraldehyde 3-phosphate + phosphate + NADP(+) = (2R)-3-phospho-glyceroyl phosphate + NADPH + H(+). It functions in the pathway carbohydrate biosynthesis; Calvin cycle. The sequence is that of Glyceraldehyde-3-phosphate dehydrogenase, chloroplastic (GAPA) from Gracilaria gracilis (Red alga).